Consider the following 428-residue polypeptide: Serine--tRNA ligase (428 aa).

Residue 231-233 (TAE) participates in L-serine binding. ATP contacts are provided by residues 262-264 (RRE) and V278. Residue E285 coordinates L-serine. Position 349 to 352 (349 to 352 (EVSS)) interacts with ATP. S384 contacts L-serine.

This sequence belongs to the class-II aminoacyl-tRNA synthetase family. Type-1 seryl-tRNA synthetase subfamily. Homodimer. The tRNA molecule binds across the dimer.

The protein resides in the cytoplasm. It catalyses the reaction tRNA(Ser) + L-serine + ATP = L-seryl-tRNA(Ser) + AMP + diphosphate + H(+). The enzyme catalyses tRNA(Sec) + L-serine + ATP = L-seryl-tRNA(Sec) + AMP + diphosphate + H(+). The protein operates within aminoacyl-tRNA biosynthesis; selenocysteinyl-tRNA(Sec) biosynthesis; L-seryl-tRNA(Sec) from L-serine and tRNA(Sec): step 1/1. Its function is as follows. Catalyzes the attachment of serine to tRNA(Ser). Is also able to aminoacylate tRNA(Sec) with serine, to form the misacylated tRNA L-seryl-tRNA(Sec), which will be further converted into selenocysteinyl-tRNA(Sec). In Chlamydia muridarum (strain MoPn / Nigg), this protein is Serine--tRNA ligase.